Here is a 262-residue protein sequence, read N- to C-terminus: Acyl-[acyl-carrier-protein]--UDP-N-acetylglucosamine O-acyltransferase (262 aa).

This sequence belongs to the transferase hexapeptide repeat family. LpxA subfamily. As to quaternary structure, homotrimer.

It localises to the cytoplasm. It catalyses the reaction a (3R)-hydroxyacyl-[ACP] + UDP-N-acetyl-alpha-D-glucosamine = a UDP-3-O-[(3R)-3-hydroxyacyl]-N-acetyl-alpha-D-glucosamine + holo-[ACP]. Its pathway is glycolipid biosynthesis; lipid IV(A) biosynthesis; lipid IV(A) from (3R)-3-hydroxytetradecanoyl-[acyl-carrier-protein] and UDP-N-acetyl-alpha-D-glucosamine: step 1/6. In terms of biological role, involved in the biosynthesis of lipid A, a phosphorylated glycolipid that anchors the lipopolysaccharide to the outer membrane of the cell. The protein is Acyl-[acyl-carrier-protein]--UDP-N-acetylglucosamine O-acyltransferase of Cronobacter sakazakii (strain ATCC BAA-894) (Enterobacter sakazakii).